A 342-amino-acid polypeptide reads, in one-letter code: Paired box protein Pax-9 (342 aa).

The paired DNA-binding region spans 4–130 (AFGEVNQLGG…SSISRILRNK (127 aa)). Residues 7–63 (EVNQLGGVFVNGRPLPNAIRLRIVELAQLGIRPCDISRQLRVSHGCVSKILARYNET) form a PAI subdomain region. The segment at 82–130 (TVVKHIRTYKQRDPGIFAWEIRDRLLADGVCDKYNVPSVSSISRILRNK) is RED subdomain. Residues 168 to 189 (AAAAKVPTPPGVPAIPGSVALP) are interaction with KDM5B.

Interacts with KDM5B.

It is found in the nucleus. In terms of biological role, transcription factor required for normal development of thymus, parathyroid glands, ultimobranchial bodies, teeth, skeletal elements of skull and larynx as well as distal limbs. The chain is Paired box protein Pax-9 from Rattus norvegicus (Rat).